The sequence spans 233 residues: Sugar fermentation stimulation protein homolog (233 aa).

This sequence belongs to the SfsA family.

This is Sugar fermentation stimulation protein homolog from Acetivibrio thermocellus (strain ATCC 27405 / DSM 1237 / JCM 9322 / NBRC 103400 / NCIMB 10682 / NRRL B-4536 / VPI 7372) (Clostridium thermocellum).